A 508-amino-acid chain; its full sequence is Photosystem II CP47 reaction center protein (508 aa).

Transmembrane regions (helical) follow at residues 21 to 36, 101 to 115, 140 to 156, 203 to 218, 237 to 252, and 457 to 472; these read AVHI…WAGS, IILS…IWHW, GIHL…FGAF, IAAG…FHLS, VLSS…AFIV, and CFAL…HGAR.

The protein belongs to the PsbB/PsbC family. PsbB subfamily. In terms of assembly, PSII is composed of 1 copy each of membrane proteins PsbA, PsbB, PsbC, PsbD, PsbE, PsbF, PsbH, PsbI, PsbJ, PsbK, PsbL, PsbM, PsbT, PsbX, PsbY, PsbZ, Psb30/Ycf12, at least 3 peripheral proteins of the oxygen-evolving complex and a large number of cofactors. It forms dimeric complexes. The cofactor is Binds multiple chlorophylls. PSII binds additional chlorophylls, carotenoids and specific lipids..

The protein resides in the plastid. The protein localises to the chloroplast thylakoid membrane. In terms of biological role, one of the components of the core complex of photosystem II (PSII). It binds chlorophyll and helps catalyze the primary light-induced photochemical processes of PSII. PSII is a light-driven water:plastoquinone oxidoreductase, using light energy to abstract electrons from H(2)O, generating O(2) and a proton gradient subsequently used for ATP formation. This chain is Photosystem II CP47 reaction center protein, found in Chara vulgaris (Common stonewort).